A 127-amino-acid chain; its full sequence is Glycine cleavage system H protein (127 aa).

One can recognise a Lipoyl-binding domain in the interval 24 to 105 (TLTIGITDLA…AYDAWLFKIK (82 aa)). At Lys-65 the chain carries N6-lipoyllysine.

This sequence belongs to the GcvH family. In terms of assembly, the glycine cleavage system is composed of four proteins: P, T, L and H. (R)-lipoate serves as cofactor.

The glycine cleavage system catalyzes the degradation of glycine. The H protein shuttles the methylamine group of glycine from the P protein to the T protein. This Ralstonia nicotianae (strain ATCC BAA-1114 / GMI1000) (Ralstonia solanacearum) protein is Glycine cleavage system H protein.